We begin with the raw amino-acid sequence, 246 residues long: tRNA (guanine-N(1)-)-methyltransferase (246 aa).

S-adenosyl-L-methionine contacts are provided by residues G113 and 133–138 (IGDFVM).

It belongs to the RNA methyltransferase TrmD family. In terms of assembly, homodimer.

It is found in the cytoplasm. The enzyme catalyses guanosine(37) in tRNA + S-adenosyl-L-methionine = N(1)-methylguanosine(37) in tRNA + S-adenosyl-L-homocysteine + H(+). Functionally, specifically methylates guanosine-37 in various tRNAs. The sequence is that of tRNA (guanine-N(1)-)-methyltransferase from Vibrio atlanticus (strain LGP32) (Vibrio splendidus (strain Mel32)).